Consider the following 1315-residue polypeptide: MGLEFFFKFGYAFLTITLMIMIWMSLARASMFDREMEETHYPPCTYNVMCTCSKSSTDLGIVHCKNVPFPALPRMVNQSKVFMLHMENTGLREIEPYFLQSTGMYRLKISGNHLTEIPDDAFTGLERSLWELILPQNDLVEIPSKSLRHLQKLRHLDLGYNHITHIQHDSFRGLEDSLQTLILRENCISQLMSHSFSGLLILETLDLSGNNLFEIDPNVFVDGMPRLTRLLLTDNILSEIPYDALGPLKSLRTLDISHNVIWSLSGNETYEIKASTKLNLDNLHLEYNHIEVLPPNSFKYFDTVNRTFFDGNPIHTLREDAFKPARIREIYMRYCGLTNISPVAFDSLVNSLQILDLSGNNLTKLHHKLFNNFDVLRVISMRDNKIKIQKPTETFNAVHYTLLKLDLSGDRNDPTNLQTLRNMTRMRNMRSLSISRLGSSSVGPEDFKDFGVELEDLQITRASLSGIQSHAFKHVRGLKRLDFSENGISSIENDAFHEIGHSLISLKMSHGYSGSALPAEPLRHLTSLQELDFSNNHISSMSDTSFHFLKNLRLLELHDNRIEQVLKGTFQGDIHSKLEEISLRFNHLTSISQHTFFDLEALRKLHLDDNKIDKIERRAFMNLDELEYLSLRGNKINNLADESFQNLPKLEILDMAFNQLPNFNFDYFDQVGTLSNLNVNVSHNQIRQLMYNSSWSGRNEHGGMYHSNIKILDLSHNNISIIHPGYFRPAEISLTHLHLGYNSLMNTTRDVFGNMPHLQWLDLSYNWIHELDFDAFKNTKQLQLVFFGHNYLSDIPQDIFKPVQGLRIVDFSHNHLRGLPDNLFYNGGMEKLDVSHNMMLKIPSSSLSSLAALTLCELHLSNNFISTIHSMDLSNKFRSLRYLDISYNYLLRIDDAVFATMPKLAVLDLSHNRDLKVMDKSFMGLENSLIKLGLENISLSTVPEIRLKYLREFRLGYNELPSIPQELAHNMSNLRMLDLSNNDLTNVPLMTQALPHLRRLMLSGNPITSLNNNSFDGVNEDLEMLDISNFRLHYFEYGCLDSLPHLRSLKLTAYSHLEHFNIPHLLRHHYNIRQLWIEAPQPFTRIVKKGSGPTQEMQTLQLGNPTDLQREMEGHLPSKLTNITFSGPQFTNLNERILRGMRSPYLYMQLFNTSLQALPPNFFKYMGRVRNISLDIRYHNRNLKKIPNPNTGAVPYLPNSVFLTDLKMSHTDLNCDCDLGWVEFWQRKRRQYICSSQTWTDTVFRTFMNSPCQVYGRHNCDEHDDDLRETRCENKGGQQLMEALKFDLECGWDNANCREAAFVVVMVCVAMVFWM.

An N-terminal signal peptide occupies residues 1–29; the sequence is MGLEFFFKFGYAFLTITLMIMIWMSLARA. An N-linked (GlcNAc...) (high mannose) asparagine; alternate glycan is attached at N77. N77 is a glycosylation site (N-linked (GlcNAc...) (paucimannose) asparagine; alternate). 9 LRR repeats span residues 80-101, 103-124, 128-149, 152-173, 177-198, 201-222, 226-247, 250-271, and 279-300; these read KVFM…FLQS, GMYR…AFTG, SLWE…SLRH, KLRH…SFRG, SLQT…SFSG, ILET…VFVD, RLTR…ALGP, SLRT…ETYE, and NLDN…SFKY. N-linked (GlcNAc...) (paucimannose) asparagine; alternate glycosylation occurs at N267. An N-linked (GlcNAc...) (complex) asparagine; alternate glycan is attached at N267. An N-linked (GlcNAc...) (high mannose) asparagine; alternate glycan is attached at N305. A glycan (N-linked (GlcNAc...) (paucimannose) asparagine; alternate) is linked at N305. LRR repeat units lie at residues 326–347, 351–372, 375–396, 401–424, 477–498, 527–548, 551–572, 577–598, 601–622, 625–646, 649–670, 676–696, 708–729, 733–754, 757–778, 781–802, 805–826, 828–849, 854–875, 879–900, 903–924, 928–948, 949–970, 973–994, 996–1017, 1021–1044, and 1045–1066; these read RIRE…AFDS, SLQI…LFNN, VLRV…ETFN, TLLK…RNMT, GLKR…AFHE, SLQE…SFHF, NLRL…TFQG, KLEE…TFFD, ALRK…AFMN, ELEY…SFQN, KLEI…YFDQ, NLNV…SSWS, NIKI…YFRP, SLTH…VFGN, HLQW…AFKN, QLQL…IFKP, GLRI…LFYN, GMEK…SLSS, TLCE…DLSN, SLRY…VFAT, KLAV…SFMG, SLIK…IRLK, YLRE…LAHN, NLRM…TQAL, HLRR…SFDG, DLEM…DSLP, and HLRS…PHLL. N361 carries N-linked (GlcNAc...) (high mannose) asparagine glycosylation. N422 is a glycosylation site (N-linked (GlcNAc...) asparagine). N680 carries N-linked (GlcNAc...) (high mannose) asparagine glycosylation. Residue N692 is glycosylated (N-linked (GlcNAc...) (high mannose) asparagine; alternate). N692 is a glycosylation site (N-linked (GlcNAc...) (paucimannose) asparagine; alternate). The N-linked (GlcNAc...) (high mannose) asparagine glycan is linked to N718. N-linked (GlcNAc...) asparagine glycosylation occurs at N746. N936 carries an N-linked (GlcNAc...) (high mannose) asparagine glycan. Residue N970 is glycosylated (N-linked (GlcNAc...) (paucimannose) asparagine). Residue N1012 is glycosylated (N-linked (GlcNAc...) (complex) asparagine). N-linked (GlcNAc...) (high mannose) asparagine glycans are attached at residues N1122, N1152, and N1171. The LRRCT domain occupies 1211–1274; it reads TDLNCDCDLG…DDLRETRCEN (64 aa).

Belongs to the chaoptin family. As to expression, expressed in photoreceptor cells and their axons in the adult retina, the ocellus and larval photoreceptor organ.

Its subcellular location is the cell membrane. In terms of biological role, required for photoreceptor cell morphogenesis. Mediates homophilic cellular adhesion. The polypeptide is Chaoptin (chp) (Drosophila melanogaster (Fruit fly)).